Here is a 167-residue protein sequence, read N- to C-terminus: Large ribosomal subunit protein bL9 (167 aa).

The protein belongs to the bacterial ribosomal protein bL9 family.

Its function is as follows. Binds to the 23S rRNA. This is Large ribosomal subunit protein bL9 from Chlamydia muridarum (strain MoPn / Nigg).